We begin with the raw amino-acid sequence, 874 residues long: ATP-dependent RNA helicase DDX54 (874 aa).

A disordered region spans residues 1 to 76 (MAAGRRVGPG…FPTSECVSDV (76 aa)). Positions 20–30 (WKKKRLRKRRT) are enriched in basic residues. Phosphothreonine is present on T30. Phosphoserine is present on residues S33, S38, S40, and S74. Residues 39-50 (DSDDGEFEIQAE) are compositionally biased toward acidic residues. Positions 95–123 (GGFQSMGLSYPVFKGIMKKGYKVPTPIQR) match the Q motif motif. In terms of domain architecture, Helicase ATP-binding spans 126–298 (IPVILDGKDV…RAGLTEPVLI (173 aa)). Residue 139–146 (ARTGSGKT) participates in ATP binding. The DEAD box signature appears at 246–249 (DEAD). In terms of domain architecture, Helicase C-terminal spans 328–472 (YLLQNVVRPQ…ARPCEEPSVA (145 aa)). Residues 581–590 (ASSKDPSSQM) are compositionally biased toward polar residues. Positions 581 to 687 (ASSKDPSSQM…PKDFDSERGL (107 aa)) are disordered. Residues 636 to 645 (TVEGVFTEVV) are compositionally biased toward low complexity. Residues 664-685 (ETRQRDQEFYVPYRPKDFDSER) show a composition bias toward basic and acidic residues. Phosphoserine is present on residues S688 and S690. The tract at residues 712–874 (AQNMSRGQQQ…SRKGKMRKRM (163 aa)) is disordered. Polar residues predominate over residues 713–722 (QNMSRGQQQL). Basic and acidic residues-rich tracts occupy residues 737–747 (QEDKKKIKTES) and 755–771 (YKRD…KIDD). Residues S774 and S780 each carry the phosphoserine modification. A compositionally biased stretch (basic and acidic residues) spans 812-823 (MRSELKTKEQIL). A compositionally biased stretch (basic residues) spans 864–874 (PSRKGKMRKRM).

Belongs to the DEAD box helicase family. DDX54/DBP10 subfamily. As to quaternary structure, interacts in a hormone-dependent manner with nuclear receptors.

It is found in the nucleus. It localises to the nucleolus. The enzyme catalyses ATP + H2O = ADP + phosphate + H(+). Functionally, has RNA-dependent ATPase activity. Represses the transcriptional activity of nuclear receptors. The sequence is that of ATP-dependent RNA helicase DDX54 (Ddx54) from Mus musculus (Mouse).